Consider the following 359-residue polypeptide: Methylthioribose-1-phosphate isomerase (359 aa).

Substrate is bound by residues 50–52 (RGA), R93, and Q200. D241 serves as the catalytic Proton donor. 251–252 (NK) lines the substrate pocket.

Belongs to the eIF-2B alpha/beta/delta subunits family. MtnA subfamily.

The catalysed reaction is 5-(methylsulfanyl)-alpha-D-ribose 1-phosphate = 5-(methylsulfanyl)-D-ribulose 1-phosphate. It participates in amino-acid biosynthesis; L-methionine biosynthesis via salvage pathway; L-methionine from S-methyl-5-thio-alpha-D-ribose 1-phosphate: step 1/6. Functionally, catalyzes the interconversion of methylthioribose-1-phosphate (MTR-1-P) into methylthioribulose-1-phosphate (MTRu-1-P). This Symbiobacterium thermophilum (strain DSM 24528 / JCM 14929 / IAM 14863 / T) protein is Methylthioribose-1-phosphate isomerase.